The primary structure comprises 393 residues: MSGIIVFHGDTPIAMSQTTDISSIVGNDIIHINDYALRIVPRKSTLLRIHVHSLKELLDINADYTPKYHTLIKEGKIEKGSPFDAIRNINDMSWCELKLYDAGTDTFTVMHHAPKYTIEVTLNKQQMNITDMNELKKEVPVRQTESTTKDIKSKSKTVNWNDIVEEDETKTIMFNLPDDSNPDDDYWPHRSLKVRMSDEYIARHADEENNSFFNPVSPFTAIMNKMHSTPTQGQSPQTPTVVPNAVIEFEGLVMESIKTRMLNESPSSVMVAGQGMYIKMFSMDEKGNISIITRNFSKEKLKLVIIETPKSVDPAEGNRTVIVTSKPVSNGIKLRKLERGMFLRAGDIDLKMAPCANLAEATSECTKFVRAFCKAYNSVVNSNLAIKFPSELD.

Its subcellular location is the virion. The protein is Putative outer capsid protein VP9 (S9) of Micromonas pusilla reovirus (isolate Netherlands/2005) (MpRV).